A 328-amino-acid chain; its full sequence is Ketol-acid reductoisomerase (NADP(+)) (328 aa).

The region spanning 1-179 (MRVLYERDGD…GGGAAGIIET (179 aa)) is the KARI N-terminal Rossmann domain. Residues 24 to 27 (YGSQ), arginine 47, and serine 51 contribute to the NADP(+) site. Histidine 106 is a catalytic residue. Glycine 132 serves as a coordination point for NADP(+). Residues 180-325 (TFVDETETDL…ARLRSRMTCA (146 aa)) enclose the KARI C-terminal knotted domain. Mg(2+)-binding residues include aspartate 188, glutamate 192, glutamate 224, and glutamate 228. Serine 249 provides a ligand contact to substrate.

This sequence belongs to the ketol-acid reductoisomerase family. Mg(2+) serves as cofactor.

It catalyses the reaction (2R)-2,3-dihydroxy-3-methylbutanoate + NADP(+) = (2S)-2-acetolactate + NADPH + H(+). The catalysed reaction is (2R,3R)-2,3-dihydroxy-3-methylpentanoate + NADP(+) = (S)-2-ethyl-2-hydroxy-3-oxobutanoate + NADPH + H(+). The protein operates within amino-acid biosynthesis; L-isoleucine biosynthesis; L-isoleucine from 2-oxobutanoate: step 2/4. It participates in amino-acid biosynthesis; L-valine biosynthesis; L-valine from pyruvate: step 2/4. In terms of biological role, involved in the biosynthesis of branched-chain amino acids (BCAA). Catalyzes an alkyl-migration followed by a ketol-acid reduction of (S)-2-acetolactate (S2AL) to yield (R)-2,3-dihydroxy-isovalerate. In the isomerase reaction, S2AL is rearranged via a Mg-dependent methyl migration to produce 3-hydroxy-3-methyl-2-ketobutyrate (HMKB). In the reductase reaction, this 2-ketoacid undergoes a metal-dependent reduction by NADPH to yield (R)-2,3-dihydroxy-isovalerate. This Tremblaya princeps protein is Ketol-acid reductoisomerase (NADP(+)).